A 103-amino-acid chain; its full sequence is Small ribosomal subunit protein uS10 (103 aa).

This sequence belongs to the universal ribosomal protein uS10 family. Part of the 30S ribosomal subunit.

Involved in the binding of tRNA to the ribosomes. The sequence is that of Small ribosomal subunit protein uS10 from Stenotrophomonas maltophilia (strain R551-3).